Reading from the N-terminus, the 113-residue chain is Large ribosomal subunit protein uL22 (113 aa).

Belongs to the universal ribosomal protein uL22 family. Part of the 50S ribosomal subunit.

Its function is as follows. This protein binds specifically to 23S rRNA; its binding is stimulated by other ribosomal proteins, e.g. L4, L17, and L20. It is important during the early stages of 50S assembly. It makes multiple contacts with different domains of the 23S rRNA in the assembled 50S subunit and ribosome. The globular domain of the protein is located near the polypeptide exit tunnel on the outside of the subunit, while an extended beta-hairpin is found that lines the wall of the exit tunnel in the center of the 70S ribosome. The protein is Large ribosomal subunit protein uL22 of Geobacillus thermodenitrificans (strain NG80-2).